A 167-amino-acid chain; its full sequence is uncharacterized protein (167 aa).

Residues Ile-4–Asp-24 traverse the membrane as a helical segment.

It localises to the membrane. This is an uncharacterized protein from Rickettsia prowazekii (strain Madrid E).